The following is a 365-amino-acid chain: tRNA 2-selenouridine synthase (365 aa).

The 124-residue stretch at 15 to 138 (FIAGQPLIDL…MRQYLIGVIE (124 aa)) folds into the Rhodanese domain. The active-site S-selanylcysteine intermediate is the Cys-98.

Belongs to the SelU family. Monomer.

It carries out the reaction 5-methylaminomethyl-2-thiouridine(34) in tRNA + selenophosphate + (2E)-geranyl diphosphate + H2O + H(+) = 5-methylaminomethyl-2-selenouridine(34) in tRNA + (2E)-thiogeraniol + phosphate + diphosphate. The enzyme catalyses 5-methylaminomethyl-2-thiouridine(34) in tRNA + (2E)-geranyl diphosphate = 5-methylaminomethyl-S-(2E)-geranyl-thiouridine(34) in tRNA + diphosphate. The catalysed reaction is 5-methylaminomethyl-S-(2E)-geranyl-thiouridine(34) in tRNA + selenophosphate + H(+) = 5-methylaminomethyl-2-(Se-phospho)selenouridine(34) in tRNA + (2E)-thiogeraniol. It catalyses the reaction 5-methylaminomethyl-2-(Se-phospho)selenouridine(34) in tRNA + H2O = 5-methylaminomethyl-2-selenouridine(34) in tRNA + phosphate. Involved in the post-transcriptional modification of the uridine at the wobble position (U34) of tRNA(Lys), tRNA(Glu) and tRNA(Gln). Catalyzes the conversion of 2-thiouridine (S2U-RNA) to 2-selenouridine (Se2U-RNA). Acts in a two-step process involving geranylation of 2-thiouridine (S2U) to S-geranyl-2-thiouridine (geS2U) and subsequent selenation of the latter derivative to 2-selenouridine (Se2U) in the tRNA chain. This chain is tRNA 2-selenouridine synthase, found in Shewanella sp. (strain ANA-3).